We begin with the raw amino-acid sequence, 209 residues long: Probable septum site-determining protein MinC (209 aa).

It belongs to the MinC family. Interacts with MinD and FtsZ.

Its function is as follows. Cell division inhibitor that blocks the formation of polar Z ring septums. Rapidly oscillates between the poles of the cell to destabilize FtsZ filaments that have formed before they mature into polar Z rings. Prevents FtsZ polymerization. This is Probable septum site-determining protein MinC from Clostridium kluyveri (strain NBRC 12016).